The primary structure comprises 483 residues: Glutarate-semialdehyde dehydrogenase (483 aa).

Residues 156-157 (WN), 180-183 (KPAS), and 233-234 (GS) each bind NADP(+). The active-site Proton acceptor is the E255. L256 is a binding site for NADP(+). C289 functions as the Nucleophile in the catalytic mechanism. E386 contacts NADP(+).

Belongs to the aldehyde dehydrogenase family.

It carries out the reaction 5-oxopentanoate + NADP(+) + H2O = glutarate + NADPH + 2 H(+). It functions in the pathway amino-acid degradation. Its function is as follows. Catalyzes the conversion of 5-oxopentanoate (glutarate semialdehyde) to glutarate. Involved in L-lysine degradation. In Pseudomonas aeruginosa (strain ATCC 15692 / DSM 22644 / CIP 104116 / JCM 14847 / LMG 12228 / 1C / PRS 101 / PAO1), this protein is Glutarate-semialdehyde dehydrogenase.